A 319-amino-acid polypeptide reads, in one-letter code: N-acyl-aromatic-L-amino acid amidohydrolase (carboxylate-forming) (319 aa).

Residues 1-210 (MCSLPGSRKP…SILDFIELFN (210 aa)) form a hydrolytic domain region. Positions 21 and 24 each coordinate Zn(2+). Residues Arg63 and 70–71 (NR) contribute to the substrate site. His116 is a binding site for Zn(2+). Residues Glu178 and Tyr288 each contribute to the substrate site. The interval 211–318 (QGMEFPAFEM…PGLTPSSTQT (108 aa)) is shielding domain. Thr318 bears the Phosphothreonine mark.

It belongs to the AspA/AstE family. Aspartoacylase subfamily. In terms of assembly, exists as a mixture of homodimers and homotetramer, both catalytically active. Zn(2+) serves as cofactor.

It localises to the apical cell membrane. The protein resides in the cytoplasm. It catalyses the reaction an N-acyl-aromatic L-alpha-amino acid + H2O = an aromatic L-alpha-amino acid + a carboxylate. The catalysed reaction is an N-acetyl-L-cysteine-S-conjugate + H2O = an S-substituted L-cysteine + acetate. Functionally, plays an important role in deacetylating mercapturic acids in kidney proximal tubules. Also acts on N-acetyl-aromatic amino acids. The protein is N-acyl-aromatic-L-amino acid amidohydrolase (carboxylate-forming) (Acy3) of Rattus norvegicus (Rat).